We begin with the raw amino-acid sequence, 614 residues long: Protein NRT1/ PTR FAMILY 7.3 (614 aa).

Transmembrane regions (helical) follow at residues 41–61 and 87–107; these read WVAG…FFGV and WTGT…SYWG. A Phosphothreonine modification is found at Thr111. 9 consecutive transmembrane segments (helical) span residues 114–134, 152–172, 196–216, 226–246, 355–375, 390–410, 435–455, 515–535, and 559–579; these read IFQV…YMFL, MMEI…YGGY, IAFF…SNTI, WALG…LFLV, PIWL…SLFV, IPPA…IFLY, MGIG…VECY, LCMM…TMVV, and FYFL…ACAK. Positions 592–614 are disordered; it reads MQDMSDDDYDTESEEEREKDSKV. Residues 593–606 are compositionally biased toward acidic residues; it reads QDMSDDDYDTESEE.

The protein belongs to the major facilitator superfamily. Proton-dependent oligopeptide transporter (POT/PTR) (TC 2.A.17) family. High expression in roots. Barely detected in shoots. Expressed in root pericycle cells close to the xylem.

Its subcellular location is the cell membrane. Functionally, low-affinity proton-dependent bidirectional nitrate transporter. Involved in nitrate loading into xylem and not in nitrate uptake. Not involved in histidine or dipeptides transport. The sequence is that of Protein NRT1/ PTR FAMILY 7.3 (NPF7.3) from Arabidopsis thaliana (Mouse-ear cress).